Here is a 511-residue protein sequence, read N- to C-terminus: MKRRAIISVSNKKGIVTFAKQLAELGVEIISTGGTKRVLAEHGVPVISISDVTNFPEILDGRVKTLHPNIHGGLLAVRDDETHQQQLQAHNITPIDFVVVNLYPFQETIAKPNVTLMEAIEQIDIGGPTMLRAAAKNHAYVTAVVDPADYHLVIEQLKQYGEVLLETRRALAAKVFRHTAAYDAMIAQYLTNIVGETYPETMTMTFVKKQSLRYGENPHQTAAFYEKPLSSPFSIAAAKQLHGKELSYNNINDANAALQIVAEFVEPAAVAVKHMNPCGVGVGETIAEAFQKAYEADPTSIFGGIVALNREVDEQMAAKLHDIFLEIVIAPSFTEQALEILTRKKNIRLLTVDFEVERKKEPFVVSVRGGLLVQDEDTYTIDDATLRVVTERKPTEEEWSNLTFAWRVVKHVKSNAIVLAKNGMTIGVGAGQMNRVGAAKIAIEQAGDRAKGAVLASDAFFPMSDTVEAAAQAGVTAIIQPGGSIRDEDSIQKANEYGIAMVFTGVRHFKH.

The 145-residue stretch at 1–145 (MKRRAIISVS…KNHAYVTAVV (145 aa)) folds into the MGS-like domain.

The protein belongs to the PurH family.

The catalysed reaction is (6R)-10-formyltetrahydrofolate + 5-amino-1-(5-phospho-beta-D-ribosyl)imidazole-4-carboxamide = 5-formamido-1-(5-phospho-D-ribosyl)imidazole-4-carboxamide + (6S)-5,6,7,8-tetrahydrofolate. It catalyses the reaction IMP + H2O = 5-formamido-1-(5-phospho-D-ribosyl)imidazole-4-carboxamide. It participates in purine metabolism; IMP biosynthesis via de novo pathway; 5-formamido-1-(5-phospho-D-ribosyl)imidazole-4-carboxamide from 5-amino-1-(5-phospho-D-ribosyl)imidazole-4-carboxamide (10-formyl THF route): step 1/1. It functions in the pathway purine metabolism; IMP biosynthesis via de novo pathway; IMP from 5-formamido-1-(5-phospho-D-ribosyl)imidazole-4-carboxamide: step 1/1. In Anoxybacillus flavithermus (strain DSM 21510 / WK1), this protein is Bifunctional purine biosynthesis protein PurH.